The primary structure comprises 506 residues: MAAVVSAKPLCDSEPAIPAPPSVKEDNSNDTKDPEENSNDGSQPAKRRRMSGDSTPSCENSNQDFGSSYFPAENVIEYKWPPDETGEYYMLQEQVSEYLGVTSFKRKYPDLERRDLSHKEKLYLRELNVITETQCTLGLTALRSDEVIDLMIKEYPAKHAEYSVILQEKERQRITDHYKEYSQLQQQNTQKVEAGKVPEYIKKAAKKAAEFNSNLNRERMEERRAYFDLQTHIIQVPQGKYKILPSEMTKVSPYPVSLIPGQFQEYYKRYSPNELRYLPLNTALYEPPLDPLDPELLALDSDGDSDEVEEMKSEKKKTKGSSVRLSIDSSSMNMSESDNTQDTQEETPQPRPKVKEKSSTPRKEGSKRSVLSKSVSGYKPKSIPNAICGICLKGKDANKKGRSERLIHCSQCDNSGHPSCLDMSAELVAVIKKYPWQCMECKTCIICGQPHHEEEMMFCDTCDRGYHTFCVGLGALPSGRWICDCCQKVPATPKKGARKVKNSKEG.

Disordered regions lie at residues 1–66 and 293–377; these read MAAV…QDFG and DPEL…SVSG. Residues 23 to 35 are compositionally biased toward basic and acidic residues; the sequence is VKEDNSNDTKDPE. Residues 52–66 show a composition bias toward polar residues; that stretch reads GDSTPSCENSNQDFG. An SAY region spans residues 90–299; sequence MLQEQVSEYL…DPLDPELLAL (210 aa). A compositionally biased stretch (low complexity) spans 326–338; the sequence is SIDSSSMNMSESD. Basic and acidic residues predominate over residues 353–367; that stretch reads KVKEKSSTPRKEGSK. The segment at 387-444 adopts a PHD-type 1; degenerate zinc-finger fold; that stretch reads ICGICLKGKDANKKGRSERLIHCSQCDNSGHPSCLDMSAELVAVIKKYPWQCMECKTC. A PHD-type 2; degenerate zinc finger spans residues 446–489; it reads ICGQPHHEEEMMFCDTCDRGYHTFCVGLGALPSGRWICDCCQKV.

The protein belongs to the SAYP family. Component of neural progenitors-specific chromatin remodeling complex (npBAF complex), a subfamily of ATP-dependent SWI/SNF chromatin remodeling complexes.

It is found in the nucleus. Functionally, involved in transcription activity regulation by chromatin remodeling in the context of the neural progenitors-specific chromatin remodeling complex (npBAF complex). May play a role in the proliferation of neural progenitors. The polypeptide is PHD finger protein 10 (phf10) (Xenopus laevis (African clawed frog)).